Reading from the N-terminus, the 846-residue chain is Neurotactin (846 aa).

The disordered stretch occupies residues 1 to 222 (MGELEEKETP…EDASDAPPKR (222 aa)). At 1 to 324 (MGELEEKETP…LRGYKCSVDD (324 aa)) the chain is on the cytoplasmic side. A compositionally biased stretch (low complexity) spans 11-20 (PTETTAAQQE). A compositionally biased stretch (basic and acidic residues) spans 23-42 (EEPKETDKMLDKKEDAKEKT). Thr-28 carries the post-translational modification Phosphothreonine; by PKC. A Phosphothreonine modification is found at Thr-42. Ser-44 is modified (phosphoserine). Thr-47 is subject to Phosphothreonine. 2 positions are modified to phosphoserine: Ser-48 and Ser-52. The segment covering 63 to 74 (AEKKIDDAELAK) has biased composition (basic and acidic residues). Ser-75 is subject to Phosphoserine; by PKC. Ser-77 carries the phosphoserine modification. Composition is skewed to basic and acidic residues over residues 95-111 (DSAD…EVKP), 141-155 (LLEK…KEAN), 163-178 (GKDE…ERLR), and 185-205 (PSAE…KSEA). Ser-103 bears the Phosphoserine; by PKC mark. Ser-169 bears the Phosphoserine; by PKC mark. Ser-186 and Ser-203 each carry phosphoserine. A Phosphothreonine modification is found at Thr-206. Ser-256 is subject to Phosphoserine. Thr-259 is subject to Phosphothreonine. Ser-263 carries the post-translational modification Phosphoserine. The residue at position 269 (Thr-269) is a Phosphothreonine. A helical; Signal-anchor for type II membrane protein membrane pass occupies residues 325-346 (ALIVFGILLFVLLLGVIGYVLT). Residues 347–846 (HETLTSPPLR…DIVPRYARVD (500 aa)) are Extracellular-facing. Residues Asn-410, Asn-417, and Asn-428 are each glycosylated (N-linked (GlcNAc...) asparagine). 2 cysteine pairs are disulfide-bonded: Cys-422-Cys-437 and Cys-600-Cys-605. Asn-636, Asn-691, and Asn-720 each carry an N-linked (GlcNAc...) asparagine glycan. A disulfide bridge connects residues Cys-738 and Cys-830.

The protein in the C-terminal section; belongs to the type-B carboxylesterase/lipase family. In terms of tissue distribution, late in embryogenesis, expression is restricted to cells of the peripheral and central nervous system undergoing proliferation and differentiation. Also expressed in larval CNS, mesoderm and imaginal disks.

It is found in the membrane. Functionally, may mediate or modulate cell adhesion between embryonic cells during development. The chain is Neurotactin (Nrt) from Drosophila melanogaster (Fruit fly).